The chain runs to 571 residues: Putative diflavin flavoprotein A 1 (571 aa).

Residues 43-236 (ENGTTYNSFL…PPVQLVATGH (194 aa)) form a zinc metallo-hydrolase region. Positions 92, 94, 96, 159, 178, and 236 each coordinate Fe cation. The Flavodoxin-like domain occupies 265–426 (VAIFYAANYG…DLDKALGRLS (162 aa)). The tract at residues 427–571 (GGLYIITAQK…VHHRKVGNHY (145 aa)) is flavodoxin-reductase-like.

In the N-terminal section; belongs to the zinc metallo-hydrolase group 3 family. It in the C-terminal section; belongs to the flavodoxin reductase family. It depends on Fe cation as a cofactor.

Functionally, mediates electron transfer from NADH to oxygen, reducing it to water. This modular protein has 3 redox cofactors, in other organisms the same activity requires 2 or 3 proteins. This is Putative diflavin flavoprotein A 1 (dfa1) from Thermosynechococcus vestitus (strain NIES-2133 / IAM M-273 / BP-1).